Here is a 120-residue protein sequence, read N- to C-terminus: Prefoldin subunit beta (120 aa).

Belongs to the prefoldin subunit beta family. In terms of assembly, heterohexamer of two alpha and four beta subunits.

It is found in the cytoplasm. In terms of biological role, molecular chaperone capable of stabilizing a range of proteins. Seems to fulfill an ATP-independent, HSP70-like function in archaeal de novo protein folding. The sequence is that of Prefoldin subunit beta from Methanospirillum hungatei JF-1 (strain ATCC 27890 / DSM 864 / NBRC 100397 / JF-1).